A 347-amino-acid chain; its full sequence is UDP-glucose 4-epimerase (347 aa).

NAD(+) is bound by residues 11–13 (GYI), 32–36 (DNFHN), 65–66 (DI), Phe87, and Lys91. 131-133 (SAT) lines the substrate pocket. Tyr156 (proton acceptor) is an active-site residue. NAD(+) contacts are provided by Lys160 and Tyr184. Substrate-binding positions include 184–186 (YFN), 205–207 (NNL), 223–225 (NVF), Arg238, and 299–302 (REGD).

The protein belongs to the NAD(P)-dependent epimerase/dehydratase family. Homodimer. NAD(+) serves as cofactor.

It carries out the reaction UDP-alpha-D-glucose = UDP-alpha-D-galactose. It catalyses the reaction UDP-N-acetyl-alpha-D-glucosamine = UDP-N-acetyl-alpha-D-galactosamine. It functions in the pathway carbohydrate metabolism; galactose metabolism. Catalyzes two distinct but analogous reactions: the reversible epimerization of UDP-glucose to UDP-galactose and the reversible epimerization of UDP-N-acetylglucosamine to UDP-N-acetylgalactosamine. The reaction with UDP-Gal plays a critical role in the Leloir pathway of galactose catabolism in which galactose is converted to the glycolytic intermediate glucose 6-phosphate. It contributes to the catabolism of dietary galactose and enables the endogenous biosynthesis of both UDP-Gal and UDP-GalNAc when exogenous sources are limited. Both UDP-sugar interconversions are important in the synthesis of glycoproteins and glycolipids. The chain is UDP-glucose 4-epimerase (Gale) from Mus musculus (Mouse).